Consider the following 172-residue polypeptide: Ribosome maturation factor RimM (172 aa).

Residues 96-168 (EGEFYYHQII…RVDVELMEGL (73 aa)) enclose the PRC barrel domain.

It belongs to the RimM family. As to quaternary structure, binds ribosomal protein uS19.

It is found in the cytoplasm. In terms of biological role, an accessory protein needed during the final step in the assembly of 30S ribosomal subunit, possibly for assembly of the head region. Essential for efficient processing of 16S rRNA. May be needed both before and after RbfA during the maturation of 16S rRNA. It has affinity for free ribosomal 30S subunits but not for 70S ribosomes. This Streptococcus pyogenes serotype M6 (strain ATCC BAA-946 / MGAS10394) protein is Ribosome maturation factor RimM.